A 313-amino-acid polypeptide reads, in one-letter code: Methionyl-tRNA formyltransferase (313 aa).

112-115 (SLLP) provides a ligand contact to (6S)-5,6,7,8-tetrahydrofolate.

The protein belongs to the Fmt family.

The enzyme catalyses L-methionyl-tRNA(fMet) + (6R)-10-formyltetrahydrofolate = N-formyl-L-methionyl-tRNA(fMet) + (6S)-5,6,7,8-tetrahydrofolate + H(+). In terms of biological role, attaches a formyl group to the free amino group of methionyl-tRNA(fMet). The formyl group appears to play a dual role in the initiator identity of N-formylmethionyl-tRNA by promoting its recognition by IF2 and preventing the misappropriation of this tRNA by the elongation apparatus. This Geotalea uraniireducens (strain Rf4) (Geobacter uraniireducens) protein is Methionyl-tRNA formyltransferase.